The primary structure comprises 340 residues: Holliday junction branch migration complex subunit RuvB (340 aa).

The interval 1–181 (MDRIVEIEKA…FGMQFRLNFY (181 aa)) is large ATPase domain (RuvB-L). Residues Leu20, Arg21, Gly62, Lys65, Thr66, Thr67, 128–130 (EDF), Arg171, Tyr181, and Arg218 contribute to the ATP site. Residue Thr66 participates in Mg(2+) binding. Positions 182 to 252 (TSDELAKIVQ…RAKSSLDALG (71 aa)) are small ATPAse domain (RuvB-S). The tract at residues 255 to 340 (DLGFDEMDLK…TQKGLFDEDQ (86 aa)) is head domain (RuvB-H). The DNA site is built by Arg309 and Arg314.

The protein belongs to the RuvB family. In terms of assembly, homohexamer. Forms an RuvA(8)-RuvB(12)-Holliday junction (HJ) complex. HJ DNA is sandwiched between 2 RuvA tetramers; dsDNA enters through RuvA and exits via RuvB. An RuvB hexamer assembles on each DNA strand where it exits the tetramer. Each RuvB hexamer is contacted by two RuvA subunits (via domain III) on 2 adjacent RuvB subunits; this complex drives branch migration. In the full resolvosome a probable DNA-RuvA(4)-RuvB(12)-RuvC(2) complex forms which resolves the HJ.

It is found in the cytoplasm. It carries out the reaction ATP + H2O = ADP + phosphate + H(+). The RuvA-RuvB-RuvC complex processes Holliday junction (HJ) DNA during genetic recombination and DNA repair, while the RuvA-RuvB complex plays an important role in the rescue of blocked DNA replication forks via replication fork reversal (RFR). RuvA specifically binds to HJ cruciform DNA, conferring on it an open structure. The RuvB hexamer acts as an ATP-dependent pump, pulling dsDNA into and through the RuvAB complex. RuvB forms 2 homohexamers on either side of HJ DNA bound by 1 or 2 RuvA tetramers; 4 subunits per hexamer contact DNA at a time. Coordinated motions by a converter formed by DNA-disengaged RuvB subunits stimulates ATP hydrolysis and nucleotide exchange. Immobilization of the converter enables RuvB to convert the ATP-contained energy into a lever motion, pulling 2 nucleotides of DNA out of the RuvA tetramer per ATP hydrolyzed, thus driving DNA branch migration. The RuvB motors rotate together with the DNA substrate, which together with the progressing nucleotide cycle form the mechanistic basis for DNA recombination by continuous HJ branch migration. Branch migration allows RuvC to scan DNA until it finds its consensus sequence, where it cleaves and resolves cruciform DNA. This chain is Holliday junction branch migration complex subunit RuvB, found in Campylobacter hominis (strain ATCC BAA-381 / DSM 21671 / CCUG 45161 / LMG 19568 / NCTC 13146 / CH001A).